Consider the following 324-residue polypeptide: Uric acid degradation bifunctional protein TTL (324 aa).

The residue at position 2 (alanine 2) is an N-acetylalanine. Residues 2-29 form a required for BRI1-binding region; it reads AMEIGEDEWKVCCGSSEFAKQMSTSGPL. The interval 2 to 161 is OHCU decarboxylase; the sequence is AMEIGEDEWK…LRMAKLFSDK (160 aa). Histidine 58 serves as the catalytic Proton donor; for OHCU decarboxylase activity. Residues histidine 58, proline 59, glutamate 80, phenylalanine 111, isoleucine 113, and alanine 115 each contribute to the (S)-allantoin site. Residues 178–324 are HIU hydrolase; sequence KPQDRLRIIG…PFSFSTYRGS (147 aa). An Internal peroxisomal targeting signal (PTS2) motif is present at residues 182–190; that stretch reads RLRIIGGHL.

It in the N-terminal section; belongs to the OHCU decarboxylase family. The protein in the C-terminal section; belongs to the transthyretin family. 5-hydroxyisourate hydrolase subfamily. As to quaternary structure, homodimer. Forms tetramers. Interacts with BRI1 in a kinase-dependent manner. Interacts with B1L. Phosphorylated by BRI1 in vitro. In terms of tissue distribution, expressed ubiquitously with highest levels in flowers buds and elongating inflorescences. As to expression, mainly expressed in stems and leaves, and, to a lower extent, in flowers, flower buds and seedlings. Strongly expressed in flower buds and leaves, to a lower extent in stems, and at low levels in seedlings and flowers.

Its subcellular location is the cell membrane. The protein resides in the peroxisome. It is found in the cytoplasm. It localises to the cytosol. The enzyme catalyses 5-hydroxyisourate + H2O = 5-hydroxy-2-oxo-4-ureido-2,5-dihydro-1H-imidazole-5-carboxylate + H(+). It carries out the reaction 5-hydroxy-2-oxo-4-ureido-2,5-dihydro-1H-imidazole-5-carboxylate + H(+) = (S)-allantoin + CO2. It functions in the pathway purine metabolism; urate degradation; (S)-allantoin from urate: step 2/3. The protein operates within purine metabolism; urate degradation; (S)-allantoin from urate: step 3/3. Functionally, involved in the last two steps of the degradation of uric acid, i.e. the hydrolysis of 5-hydroxyisourate (HIU) to 2-oxo-4-hydroxy-4-carboxy-5-ureidoimidazoline (OHCU) and its stereoselective decarboxylation to (S)-allantoin, a major ureide compound. Might function as a negative regulator to modulate brassinosteroid-mediated plant growth. Together with B1L, prevents plant growth and development, but by opposition to B1L, negatively regulates cold tolerance, probably in a brassinosteroid (BR) and allantoin-dependent manner. This chain is Uric acid degradation bifunctional protein TTL, found in Arabidopsis thaliana (Mouse-ear cress).